We begin with the raw amino-acid sequence, 89 residues long: Large ribosomal subunit protein uL23c (89 aa).

This sequence belongs to the universal ribosomal protein uL23 family. Part of the 50S ribosomal subunit.

The protein resides in the plastid. It localises to the chloroplast. Functionally, binds to 23S rRNA. This is Large ribosomal subunit protein uL23c (rpl23) from Staurastrum punctulatum (Green alga).